Consider the following 380-residue polypeptide: MVDPVALARALIQAPSVTPMDHGCQDLLIRHLEDLGFTVHRLRFGHVENFYARLGSKGRNFTFAGHTDVVGAGDTSRWSSDPFAATLEEGYITGRGAVDMKGGLACMVAATARFLAARPHFAQQHSLSFLITGDEEGDALDGTLKVLQWLESQQEKMDYCLVGEPTSAAQLGDCIKNGRRGSVNGRLTIRGVQGHVAYPHLVDNPIHRAAPVLAAISSMTFDQGDRFFQPTSLQFTAVQSGGSATNVVPGELTAGFNIRFSAMHTPESLEARIRQVLDGAEVDYDLQMMTSGLPFITEGGPLVEAVKATVAQVTGLEPQLSTGGGTSDARFISRHCVQTVEFGLVGSTMHKVDERVPVADLEVLTEVYRRLLERLYPPQG.

H66 is a Zn(2+) binding site. The active site involves D68. A Zn(2+)-binding site is contributed by D99. Residue E135 is the Proton acceptor of the active site. Residues E136, E164, and H350 each contribute to the Zn(2+) site.

It belongs to the peptidase M20A family. DapE subfamily. In terms of assembly, homodimer. Requires Zn(2+) as cofactor. The cofactor is Co(2+).

It carries out the reaction N-succinyl-(2S,6S)-2,6-diaminopimelate + H2O = (2S,6S)-2,6-diaminopimelate + succinate. It functions in the pathway amino-acid biosynthesis; L-lysine biosynthesis via DAP pathway; LL-2,6-diaminopimelate from (S)-tetrahydrodipicolinate (succinylase route): step 3/3. In terms of biological role, catalyzes the hydrolysis of N-succinyl-L,L-diaminopimelic acid (SDAP), forming succinate and LL-2,6-diaminopimelate (DAP), an intermediate involved in the bacterial biosynthesis of lysine and meso-diaminopimelic acid, an essential component of bacterial cell walls. This Magnetococcus marinus (strain ATCC BAA-1437 / JCM 17883 / MC-1) protein is Succinyl-diaminopimelate desuccinylase.